Consider the following 393-residue polypeptide: tRNA(Met) cytidine acetate ligase (393 aa).

ATP-binding residues include G81, N142, and R167.

Belongs to the TmcAL family.

Its subcellular location is the cytoplasm. It catalyses the reaction cytidine(34) in elongator tRNA(Met) + acetate + ATP = N(4)-acetylcytidine(34) in elongator tRNA(Met) + AMP + diphosphate. Functionally, catalyzes the formation of N(4)-acetylcytidine (ac(4)C) at the wobble position of elongator tRNA(Met), using acetate and ATP as substrates. First activates an acetate ion to form acetyladenylate (Ac-AMP) and then transfers the acetyl group to tRNA to form ac(4)C34. The polypeptide is tRNA(Met) cytidine acetate ligase (Bacillus cereus (strain ZK / E33L)).